We begin with the raw amino-acid sequence, 469 residues long: Citrate synthase, mitochondrial (469 aa).

Residues 1 to 30 constitute a mitochondrion transit peptide; it reads MSFLSVSRLAPKLLNSKNATYFLVAARNAS. Catalysis depends on residues histidine 304 and histidine 350. Arginine 359 lines the oxaloacetate pocket. The active site involves aspartate 405. Oxaloacetate-binding residues include arginine 431 and arginine 451.

The protein belongs to the citrate synthase family. Homodimer.

Its subcellular location is the mitochondrion matrix. The catalysed reaction is oxaloacetate + acetyl-CoA + H2O = citrate + CoA + H(+). It participates in carbohydrate metabolism; tricarboxylic acid cycle; isocitrate from oxaloacetate: step 1/2. Functionally, key enzyme of the Krebs tricarboxylic acid cycle which catalyzes the synthesis of citrate from acetyl coenzyme A and oxaloacetate. The sequence is that of Citrate synthase, mitochondrial (cs) from Thunnus albacares (Yellowfin tuna).